The following is a 276-amino-acid chain: 3-methyl-2-oxobutanoate hydroxymethyltransferase (276 aa).

Positions 49 and 88 each coordinate Mg(2+). 3-methyl-2-oxobutanoate-binding positions include 49–50 (DS), D88, and K118. Mg(2+) is bound at residue E120. E187 acts as the Proton acceptor in catalysis.

It belongs to the PanB family. In terms of assembly, homodecamer; pentamer of dimers. Mg(2+) serves as cofactor.

It localises to the cytoplasm. The catalysed reaction is 3-methyl-2-oxobutanoate + (6R)-5,10-methylene-5,6,7,8-tetrahydrofolate + H2O = 2-dehydropantoate + (6S)-5,6,7,8-tetrahydrofolate. Its pathway is cofactor biosynthesis; (R)-pantothenate biosynthesis; (R)-pantoate from 3-methyl-2-oxobutanoate: step 1/2. In terms of biological role, catalyzes the reversible reaction in which hydroxymethyl group from 5,10-methylenetetrahydrofolate is transferred onto alpha-ketoisovalerate to form ketopantoate. This Afipia carboxidovorans (strain ATCC 49405 / DSM 1227 / KCTC 32145 / OM5) (Oligotropha carboxidovorans) protein is 3-methyl-2-oxobutanoate hydroxymethyltransferase.